A 381-amino-acid chain; its full sequence is Acetylornithine deacetylase (381 aa).

Residue H79 coordinates Zn(2+). D81 is an active-site residue. A Zn(2+)-binding site is contributed by D111. E143 is an active-site residue. Zn(2+) contacts are provided by E144, E168, and H354.

Belongs to the peptidase M20A family. ArgE subfamily. In terms of assembly, homodimer. The cofactor is Zn(2+). Requires Co(2+) as cofactor. It depends on glutathione as a cofactor.

It is found in the cytoplasm. It catalyses the reaction N(2)-acetyl-L-ornithine + H2O = L-ornithine + acetate. The protein operates within amino-acid biosynthesis; L-arginine biosynthesis; L-ornithine from N(2)-acetyl-L-ornithine (linear): step 1/1. Its function is as follows. Catalyzes the hydrolysis of the amide bond of N(2)-acetylated L-amino acids. Cleaves the acetyl group from N-acetyl-L-ornithine to form L-ornithine, an intermediate in L-arginine biosynthesis pathway, and a branchpoint in the synthesis of polyamines. This Buchnera aphidicola subsp. Schizaphis graminum (strain Sg) protein is Acetylornithine deacetylase.